The chain runs to 199 residues: Fe/S biogenesis protein NfuA (199 aa).

2 residues coordinate [4Fe-4S] cluster: cysteine 151 and cysteine 154.

The protein belongs to the NfuA family. As to quaternary structure, homodimer. Requires [4Fe-4S] cluster as cofactor.

Its function is as follows. Involved in iron-sulfur cluster biogenesis. Binds a 4Fe-4S cluster, can transfer this cluster to apoproteins, and thereby intervenes in the maturation of Fe/S proteins. Could also act as a scaffold/chaperone for damaged Fe/S proteins. This chain is Fe/S biogenesis protein NfuA, found in Stenotrophomonas maltophilia (strain R551-3).